We begin with the raw amino-acid sequence, 185 residues long: Translation initiation factor IF-3 (185 aa).

It belongs to the IF-3 family. In terms of assembly, monomer.

It is found in the cytoplasm. IF-3 binds to the 30S ribosomal subunit and shifts the equilibrium between 70S ribosomes and their 50S and 30S subunits in favor of the free subunits, thus enhancing the availability of 30S subunits on which protein synthesis initiation begins. This is Translation initiation factor IF-3 from Rickettsia typhi (strain ATCC VR-144 / Wilmington).